The primary structure comprises 357 residues: Guanine nucleotide-binding protein alpha-2 subunit (357 aa).

Residue G2 is the site of N-myristoyl glycine attachment. C4 carries the S-palmitoyl cysteine lipid modification. Positions 30–356 (NEVKLLLLGA…TQCVMKAGLY (327 aa)) constitute a G-alpha domain. The segment at 33-46 (KLLLLGAGESGKST) is G1 motif. E41, S42, G43, K44, S45, and T46 together coordinate GTP. A Mg(2+)-binding site is contributed by S45. S113 is modified (phosphoserine). The GTP site is built by D154, L179, T185, G207, N272, K273, D275, and A328. The segment at 177 to 185 (DILHTRVMT) is G2 motif. A Mg(2+)-binding site is contributed by T185. Residues 200–209 (FRLVDVGGQR) are G3 motif. The segment at 268 to 275 (ILFLNKSD) is G4 motif. A G5 motif region spans residues 326-331 (TCATDT).

This sequence belongs to the G-alpha family. G proteins are composed of 3 units; alpha, beta and gamma. The alpha chain contains the guanine nucleotide binding site. Interacts with the RAP guanine nucleotide exchange factor glfB. The cofactor is Mg(2+). Ser-113 is transiently phosphorylated following stimulation with extracellular cAMP.

In terms of biological role, guanine nucleotide-binding proteins (G proteins) are involved as modulators or transducers in various transmembrane signaling systems. G alpha-2 is required for the early aggregation process and most of the known cAMP receptor-mediated responses. Interacts with downstream effector gflB, a Rap guanine nucleotide exchange factor, to regulate the balance between Ras and Rap signaling at the leading edge of chemotaxing cells. The chain is Guanine nucleotide-binding protein alpha-2 subunit (gpaB) from Dictyostelium discoideum (Social amoeba).